Here is an 81-residue protein sequence, read N- to C-terminus: Kunitz-type serine protease inhibitor NACI (81 aa).

The N-terminal stretch at M1–G24 is a signal peptide. Positions C29–C79 constitute a BPTI/Kunitz inhibitor domain. 3 disulfides stabilise this stretch: C29–C79, C38–C62, and C54–C75. N-linked (GlcNAc...) asparagine glycosylation is present at N76.

Expressed by the venom gland.

The protein resides in the secreted. In terms of biological role, serine protease inhibitor that inhibits chymotrypsin (Ki=25 nM). Also interacts with vasopressin V2 receptor (V2R/AVPR2). Inhibits vasopressin binding human V2R in the nanomolar range (Ki=112 nM), and also moderately inhibits vasopressin-induced cAMP production (IC(50)=138 nM). In vivo, intraperitoneal injection of this protein into rats increases diuresis by 2.2-fold, without any loss of electrolytes. This Naja atra (Chinese cobra) protein is Kunitz-type serine protease inhibitor NACI.